We begin with the raw amino-acid sequence, 225 residues long: GrpE protein homolog 2, mitochondrial (225 aa).

Residues 1-32 constitute a mitochondrion transit peptide; it reads MAVRSLWACRLRVQRLLAWSAAWESKGWPLPF. Lys-142 is modified (N6-acetyllysine).

It belongs to the GrpE family. Probable component of the PAM complex at least composed of a mitochondrial HSP70 protein, GRPEL1 or GRPEL2, TIMM44, TIMM16/PAM16 and TIMM14/DNAJC19.

The protein resides in the mitochondrion matrix. Essential component of the PAM complex, a complex required for the translocation of transit peptide-containing proteins from the inner membrane into the mitochondrial matrix in an ATP-dependent manner. Seems to control the nucleotide-dependent binding of mitochondrial HSP70 to substrate proteins. Stimulates ATPase activity of mt-HSP70. May also serve to modulate the interconversion of oligomeric (inactive) and monomeric (active) forms of mt-HSP70. This Pongo abelii (Sumatran orangutan) protein is GrpE protein homolog 2, mitochondrial (GRPEL2).